Consider the following 286-residue polypeptide: Flagellin FlaB2 (286 aa).

It belongs to the bacterial flagellin family. As to quaternary structure, the flagellum consists of an outer layer composed of repeating units of FlaA around a core that contains several antigenically related polypeptides. Interacts with FliW; a synthetic peptide of FlaB1 (residues 229-247) partially blocks binding of this protein to FliW.

It is found in the periplasmic flagellum. Its subcellular location is the periplasm. Its function is as follows. Component of the core of the flagella. The sequence is that of Flagellin FlaB2 from Treponema pallidum (strain Nichols).